A 158-amino-acid polypeptide reads, in one-letter code: RNA pyrophosphohydrolase (158 aa).

A Nudix hydrolase domain is found at 9–151 (PLRNGVGIVV…KLHVYKDVKE (143 aa)). The short motif at 43–64 (GGVDKGEDYLTAAYRELEEETS) is the Nudix box element.

It belongs to the Nudix hydrolase family. RppH subfamily. The cofactor is a divalent metal cation.

Functionally, accelerates the degradation of transcripts by removing pyrophosphate from the 5'-end of triphosphorylated RNA, leading to a more labile monophosphorylated state that can stimulate subsequent ribonuclease cleavage. This Pelagibacter ubique (strain HTCC1062) protein is RNA pyrophosphohydrolase.